A 458-amino-acid chain; its full sequence is tRNA-2-methylthio-N(6)-dimethylallyladenosine synthase (458 aa).

Residues 15 to 134 (KKVFIKTYGC…LPDLLEQTKQ (120 aa)) enclose the MTTase N-terminal domain. The [4Fe-4S] cluster site is built by C24, C60, C97, C175, C179, and C182. Residues 161–393 (RKRGVSAFLT…QVLLLEQQNA (233 aa)) form the Radical SAM core domain. The TRAM domain occupies 396 to 457 (RSKIGQTTDV…SNSFVGEIAN (62 aa)).

This sequence belongs to the methylthiotransferase family. MiaB subfamily. In terms of assembly, monomer. It depends on [4Fe-4S] cluster as a cofactor.

The protein resides in the cytoplasm. The enzyme catalyses N(6)-dimethylallyladenosine(37) in tRNA + (sulfur carrier)-SH + AH2 + 2 S-adenosyl-L-methionine = 2-methylsulfanyl-N(6)-dimethylallyladenosine(37) in tRNA + (sulfur carrier)-H + 5'-deoxyadenosine + L-methionine + A + S-adenosyl-L-homocysteine + 2 H(+). Its function is as follows. Catalyzes the methylthiolation of N6-(dimethylallyl)adenosine (i(6)A), leading to the formation of 2-methylthio-N6-(dimethylallyl)adenosine (ms(2)i(6)A) at position 37 in tRNAs that read codons beginning with uridine. This chain is tRNA-2-methylthio-N(6)-dimethylallyladenosine synthase, found in Bartonella quintana (strain Toulouse) (Rochalimaea quintana).